A 151-amino-acid polypeptide reads, in one-letter code: Ribosomal RNA large subunit methyltransferase H (151 aa).

Residues leucine 73, glycine 100, and 119-124 (LSKMTL) contribute to the S-adenosyl-L-methionine site.

The protein belongs to the RNA methyltransferase RlmH family. Homodimer.

The protein localises to the cytoplasm. It carries out the reaction pseudouridine(1915) in 23S rRNA + S-adenosyl-L-methionine = N(3)-methylpseudouridine(1915) in 23S rRNA + S-adenosyl-L-homocysteine + H(+). Functionally, specifically methylates the pseudouridine at position 1915 (m3Psi1915) in 23S rRNA. The protein is Ribosomal RNA large subunit methyltransferase H of Campylobacter lari (strain RM2100 / D67 / ATCC BAA-1060).